The primary structure comprises 216 residues: Cytidylate kinase (216 aa).

Glycine 7–threonine 15 provides a ligand contact to ATP.

Belongs to the cytidylate kinase family. Type 1 subfamily.

Its subcellular location is the cytoplasm. It carries out the reaction CMP + ATP = CDP + ADP. The enzyme catalyses dCMP + ATP = dCDP + ADP. The sequence is that of Cytidylate kinase from Chlamydia felis (strain Fe/C-56) (Chlamydophila felis).